A 301-amino-acid chain; its full sequence is Lycopene elongase/hydratase (301 aa).

The segment at 1–20 (MSADMAAQSESGEGGDDGRA) is disordered. Helical transmembrane passes span 39–59 (FWLYLAGPVVVGVAAAASALA), 61–81 (LFGLEPVALFAYFLVPANVFL), 110–130 (PVNTVVVAASGLLGVGLFAVA), 133–153 (VAWPWLAAHFFLAVEYSAPPF), 160–180 (LLDSVSNGLYVLPGVAAYAAV), 186–206 (PMLAVAGAWLWTMGMHTFSAI), 229–249 (TYWYCAATWVLAAVAFAAVDL), 252–272 (GALLAAYPVVVLGIVAAGVDV), and 276–296 (YWWYPVINTVVGMLITLGALW).

The protein belongs to the UbiA prenyltransferase family.

The protein resides in the cell membrane. The enzyme catalyses all-trans-lycopene + dimethylallyl diphosphate + H2O = dihydroisopentenyldehydrorhodopin + diphosphate. It carries out the reaction isopentenyldehydrorhodopin + dimethylallyl diphosphate + H2O = dihydrobisanhydrobacterioruberin + diphosphate. It participates in carotenoid biosynthesis. Involved in the biosynthesis of the acyclic C50 carotenoid bacterioruberin (BR). Acts as a bifunctional elongase/hydratase that catalyzes the elongation of lycopene by attaching a C(5) isoprene unit at C-2, as well as the hydroxylation of the previous end of the molecule. The enzyme acts at both ends of the substrate, and catalyzes the conversion of lycopene to the C(45) intermediate dihydroisopentenyldehydrorhodopin (DH-IDR) and the conversion of isopentenyldehydrorhodopin (IDR) to the C(50) carotenoid dihydrobisanhydrobacterioruberin (DH-BABR). Can also catalyze the conversion of lycopene to tetrahydrobisanhydrobacterioruberin (TH-BABR). The polypeptide is Lycopene elongase/hydratase (Haloferax volcanii (strain ATCC 29605 / DSM 3757 / JCM 8879 / NBRC 14742 / NCIMB 2012 / VKM B-1768 / DS2) (Halobacterium volcanii)).